The primary structure comprises 387 residues: Queuine tRNA-ribosyltransferase (387 aa).

Residue aspartate 105 is the Proton acceptor of the active site. Substrate is bound by residues 105 to 109 (DSGGF), aspartate 177, and glycine 248. The segment at 278–284 (GIGDLPS) is RNA binding. Aspartate 297 functions as the Nucleophile in the catalytic mechanism. The interval 302 to 306 (TRAAR) is RNA binding; important for wobble base 34 recognition. Residues cysteine 335, cysteine 337, cysteine 340, and histidine 366 each contribute to the Zn(2+) site.

Belongs to the queuine tRNA-ribosyltransferase family. As to quaternary structure, homodimer. Within each dimer, one monomer is responsible for RNA recognition and catalysis, while the other monomer binds to the replacement base PreQ1. Zn(2+) is required as a cofactor.

The catalysed reaction is 7-aminomethyl-7-carbaguanine + guanosine(34) in tRNA = 7-aminomethyl-7-carbaguanosine(34) in tRNA + guanine. It functions in the pathway tRNA modification; tRNA-queuosine biosynthesis. In terms of biological role, catalyzes the base-exchange of a guanine (G) residue with the queuine precursor 7-aminomethyl-7-deazaguanine (PreQ1) at position 34 (anticodon wobble position) in tRNAs with GU(N) anticodons (tRNA-Asp, -Asn, -His and -Tyr). Catalysis occurs through a double-displacement mechanism. The nucleophile active site attacks the C1' of nucleotide 34 to detach the guanine base from the RNA, forming a covalent enzyme-RNA intermediate. The proton acceptor active site deprotonates the incoming PreQ1, allowing a nucleophilic attack on the C1' of the ribose to form the product. After dissociation, two additional enzymatic reactions on the tRNA convert PreQ1 to queuine (Q), resulting in the hypermodified nucleoside queuosine (7-(((4,5-cis-dihydroxy-2-cyclopenten-1-yl)amino)methyl)-7-deazaguanosine). The protein is Queuine tRNA-ribosyltransferase of Protochlamydia amoebophila (strain UWE25).